Consider the following 107-residue polypeptide: Age-related maculopathy susceptibility protein 2 (107 aa).

The tract at residues 1–21 (MLRLYPGPMVTEAEGKGGPEM) is disordered.

As to expression, detected in retina and placenta.

It localises to the cytoplasm. The sequence is that of Age-related maculopathy susceptibility protein 2 (ARMS2) from Homo sapiens (Human).